Consider the following 161-residue polypeptide: MTLYDTVKELQEKLRNGEIEINTFLERLGLTLDSIWSQKLRVTGLFKYNVIKATLLSIAKTTCMYYFNKIPDVEAEDSIITTLTKIYSFISQNVKENRDKFETELVAFGKQNEIKSVADSIMIMIVENLMASLGYTETEKKYIPISDFMIRLQNIQNTTGS.

The stretch at 1 to 29 forms a coiled coil; that stretch reads MTLYDTVKELQEKLRNGEIEINTFLERLG.

This is an uncharacterized protein from Acidianus convivator (ATV).